Consider the following 1063-residue polypeptide: NAD-specific glutamate dehydrogenase (1063 aa).

The protein belongs to the Glu/Leu/Phe/Val dehydrogenases family. Highly divergent. In terms of assembly, homotetramer.

It carries out the reaction L-glutamate + NAD(+) + H2O = 2-oxoglutarate + NH4(+) + NADH + H(+). Its activity is regulated as follows. Allosterically activated by NADP(+). This Achlya klebsiana protein is NAD-specific glutamate dehydrogenase.